The following is a 300-amino-acid chain: 17-beta-hydroxysteroid dehydrogenase 13 (300 aa).

The signal sequence occupies residues 1–19 (MNLILELLLLVGIIIYSYL). At serine 33 the chain carries Phosphoserine. NAD(+) is bound at residue 40-67 (LITGAGHGIGRLTAYEFAKQKSRLVLWD). The residue at position 69 (serine 69) is a Phosphoserine. Position 79 is an N6-acetyllysine (lysine 79). Serine 172 contacts substrate. Tyrosine 185 serves as the catalytic Proton acceptor. Residue lysine 189 coordinates NAD(+).

Belongs to the short-chain dehydrogenases/reductases (SDR) family.

Its subcellular location is the lipid droplet. The protein localises to the endoplasmic reticulum. It catalyses the reaction 17beta-estradiol + NAD(+) = estrone + NADH + H(+). The catalysed reaction is all-trans-retinol + NAD(+) = all-trans-retinal + NADH + H(+). It carries out the reaction all-trans-retinal + NAD(+) + H2O = all-trans-retinoate + NADH + 2 H(+). Plays a pivotal role in hepatic lipid metabolism. In vitro, it catalyzes the oxidation of a variety of lipid substrates, including 17beta-estradiol, retinol, retinal, and leukotriene B4. The chain is 17-beta-hydroxysteroid dehydrogenase 13 (Hsd17b13) from Rattus norvegicus (Rat).